The sequence spans 508 residues: Light-independent protochlorophyllide reductase subunit B (508 aa).

D36 provides a ligand contact to [4Fe-4S] cluster. The Proton donor role is filled by D282. Position 417-418 (417-418 (GL)) interacts with substrate.

It belongs to the ChlB/BchB/BchZ family. In terms of assembly, protochlorophyllide reductase is composed of three subunits; BchL, BchN and BchB. Forms a heterotetramer of two BchB and two BchN subunits. Requires [4Fe-4S] cluster as cofactor.

The enzyme catalyses chlorophyllide a + oxidized 2[4Fe-4S]-[ferredoxin] + 2 ADP + 2 phosphate = protochlorophyllide a + reduced 2[4Fe-4S]-[ferredoxin] + 2 ATP + 2 H2O. Its pathway is porphyrin-containing compound metabolism; bacteriochlorophyll biosynthesis (light-independent). Functionally, component of the dark-operative protochlorophyllide reductase (DPOR) that uses Mg-ATP and reduced ferredoxin to reduce ring D of protochlorophyllide (Pchlide) to form chlorophyllide a (Chlide). This reaction is light-independent. The NB-protein (BchN-BchB) is the catalytic component of the complex. The chain is Light-independent protochlorophyllide reductase subunit B from Methylocella silvestris (strain DSM 15510 / CIP 108128 / LMG 27833 / NCIMB 13906 / BL2).